Here is a 546-residue protein sequence, read N- to C-terminus: CCA tRNA nucleotidyltransferase, mitochondrial (546 aa).

It belongs to the tRNA nucleotidyltransferase/poly(A) polymerase family.

The protein localises to the mitochondrion. The protein resides in the cytoplasm. Its subcellular location is the nucleus. It carries out the reaction a tRNA precursor + 2 CTP + ATP = a tRNA with a 3' CCA end + 3 diphosphate. Its function is as follows. Nucleotidyltransferase that catalyzes the addition and repair of the essential 3'-terminal CCA sequence in tRNAs, which is necessary for the attachment of amino acids to the 3' terminus of tRNA molecules, using CTP and ATP as substrates. tRNA 3'-terminal CCA addition is required both for tRNA processing and repair. Also involved in tRNA surveillance by mediating tandem CCA addition to generate a CCACCA at the 3' terminus of unstable tRNAs. While stable tRNAs receive only 3'-terminal CCA, unstable tRNAs are marked with CCACCA and rapidly degraded. The structural flexibility of RNA controls the choice between CCA versus CCACCA addition: following the first CCA addition cycle, nucleotide-binding to the active site triggers a clockwise screw motion, producing torque on the RNA. This ejects stable RNAs, whereas unstable RNAs are refolded while bound to the enzyme and subjected to a second CCA catalytic cycle. The chain is CCA tRNA nucleotidyltransferase, mitochondrial (CCA1) from Saccharomyces cerevisiae (strain ATCC 204508 / S288c) (Baker's yeast).